Here is a 552-residue protein sequence, read N- to C-terminus: Urocanate hydratase (552 aa).

NAD(+) contacts are provided by residues 49-50, Gln127, 173-175, Asp193, 239-240, 260-264, 270-271, and Tyr319; these read GG, GMG, NA, QTSAH, and YI. Residue Cys407 is part of the active site. Position 489 (Gly489) interacts with NAD(+).

Belongs to the urocanase family. It depends on NAD(+) as a cofactor.

Its subcellular location is the cytoplasm. It catalyses the reaction 4-imidazolone-5-propanoate = trans-urocanate + H2O. Its pathway is amino-acid degradation; L-histidine degradation into L-glutamate; N-formimidoyl-L-glutamate from L-histidine: step 2/3. In terms of biological role, catalyzes the conversion of urocanate to 4-imidazolone-5-propionate. The sequence is that of Urocanate hydratase from Bacillus cereus (strain B4264).